The primary structure comprises 246 residues: tRNA (guanine-N(1)-)-methyltransferase (246 aa).

Residues Gly113 and 133-138 (IGDYVL) contribute to the S-adenosyl-L-methionine site.

Belongs to the RNA methyltransferase TrmD family. In terms of assembly, homodimer.

The protein localises to the cytoplasm. It catalyses the reaction guanosine(37) in tRNA + S-adenosyl-L-methionine = N(1)-methylguanosine(37) in tRNA + S-adenosyl-L-homocysteine + H(+). Functionally, specifically methylates guanosine-37 in various tRNAs. The protein is tRNA (guanine-N(1)-)-methyltransferase of Haemophilus influenzae (strain 86-028NP).